A 493-amino-acid polypeptide reads, in one-letter code: Chitinase 1 (493 aa).

The N-terminal stretch at 1-20 is a signal peptide; sequence MISCNILGITIAAFITSTLA. Residues 27 to 318 enclose the GH18 domain; the sequence is VNVMYYWGQN…HGSSAALGQA (292 aa). The active-site Proton donor is Glu164.

Belongs to the glycosyl hydrolase 18 family. Chitinase class III subfamily.

The enzyme catalyses Random endo-hydrolysis of N-acetyl-beta-D-glucosaminide (1-&gt;4)-beta-linkages in chitin and chitodextrins.. The sequence is that of Chitinase 1 (CHI1) from Rhizopus niveus.